Here is a 166-residue protein sequence, read N- to C-terminus: MPDNSFDIVSKIEMPEVHNAVQQAMKEVQQRFDLKDSHSNIELKEKDNKILLQSSDEYKLKNVIDILQSKLVKRNVPLKGLAYGEIIPSAGSTVKQEITLQQGIAIEKARDIVKKLKDSKLKVQASIQGDFVRVAGKDRDTLQSAIALLRGSDFGIDMQFTNYRTN.

It belongs to the YajQ family.

Its function is as follows. Nucleotide-binding protein. This is Nucleotide-binding protein Acid_3194 from Solibacter usitatus (strain Ellin6076).